A 300-amino-acid chain; its full sequence is uncharacterized protein (300 aa).

4 consecutive CBS domains span residues 10 to 68 (RFPP…FRDV), 88 to 148 (FLKY…HVKV), 152 to 207 (MTSE…EDVL), and 226 to 284 (ISSK…GVEI).

This is an uncharacterized protein from Thermofilum pendens.